Consider the following 305-residue polypeptide: UDP-N-acetylenolpyruvoylglucosamine reductase 2 (305 aa).

The FAD-binding PCMH-type domain maps to 33–197; that stretch reads VGGKADVFVA…LEARFELEEG (165 aa). The active site involves Arg-176. Ser-226 acts as the Proton donor in catalysis. The active site involves Glu-296.

The protein belongs to the MurB family. The cofactor is FAD.

The protein resides in the cytoplasm. It catalyses the reaction UDP-N-acetyl-alpha-D-muramate + NADP(+) = UDP-N-acetyl-3-O-(1-carboxyvinyl)-alpha-D-glucosamine + NADPH + H(+). Its pathway is cell wall biogenesis; peptidoglycan biosynthesis. Its function is as follows. Cell wall formation. This is UDP-N-acetylenolpyruvoylglucosamine reductase 2 (murB2) from Bacillus anthracis.